The following is a 964-amino-acid chain: Myocardin-related transcription factor A (964 aa).

A mediates interaction with SCAI and ACTB region spans residues 1–291 (MTLLEPEMLM…KQDKGAPAMD (291 aa)). The stretch at 15–40 (SVLQLKLQQRRTREELVSQGIMPPLK) is one RPEL 1 repeat. Ser-41 is subject to Phosphoserine. Residues 41–58 (SPAAFHEQRRSLERARTE) form an intervening spacer sequence 1 region. The stretch at 59 to 84 (DYLKRKIRSRPERAELVRMHILEETS) is one RPEL 2 repeat. The Bipartite Nuclear localization signal motif lies at 62–100 (KRKIRSRPERAELVRMHILEETSAEPSLQAKQLKLKRAR). The intervening spacer sequence 2 stretch occupies residues 85-102 (AEPSLQAKQLKLKRARLA). Residues 103–128 (DDLNEKIAQRPGPMELVEKNILPVES) form an RPEL 3 repeat. 2 disordered regions span residues 145 to 292 (ADSS…AMDS) and 328 to 371 (LPAP…RQSS). Phosphoserine is present on residues Ser-159, Ser-174, and Ser-191. Residues 186 to 197 (SATSISPTQVLS) are compositionally biased toward polar residues. Residues 215 to 224 (PPLPPAPLLP) show a composition bias toward pro residues. A compositionally biased stretch (basic and acidic residues) spans 251–266 (ASEKSQRSKKAKELKP). Positions 340–365 (GSSAPTPSRSLSTSSSPSSGTPGPSG) are enriched in low complexity. Phosphoserine is present on residues Ser-349 and Ser-351. Thr-352 is subject to Phosphothreonine. Residues Ser-355 and Ser-358 each carry the phosphoserine modification. Thr-360 is modified (phosphothreonine). Residue Ser-371 is modified to Phosphoserine. The 35-residue stretch at 385–419 (LDDMKVAELKQELKLRSLPVSGTKTELIERLRAYQ) folds into the SAP domain. Phosphoserine occurs at positions 423 and 484. The disordered stretch occupies residues 484-508 (STGSTPPVSPTPSERSLLSTGDENS). Residue Thr-485 is modified to Phosphothreonine. Ser-487 carries the post-translational modification Phosphoserine. Position 488 is a phosphothreonine (Thr-488). At Ser-492 the chain carries Phosphoserine. Phosphothreonine is present on Thr-494. Ser-496 is subject to Phosphoserine. The segment covering 497–508 (ERSLLSTGDENS) has biased composition (polar residues). A phosphoserine mark is found at Ser-520, Ser-530, Ser-544, and Ser-548. Residues 552–600 (RAELEGLDKDQMLQEKDKQIEELTRMLQQKQQLVELLRLQLEQQKRAQQ) are a coiled coil. Ser-605, Ser-606, Ser-651, Ser-687, Ser-718, Ser-724, and Ser-728 each carry phosphoserine. Residues 638–673 (TTNHGDTQAPAPESPPVVVKQEAGPPEPDLAPSSQL) are disordered. Disordered stretches follow at residues 706-779 (NKSA…SSSQ) and 796-849 (ADFK…RLED). The span at 715 to 727 (PAGSPQQPLSQPG) shows a compositional bias: low complexity. The span at 764–779 (TVTQQPKQQENGSSSQ) shows a compositional bias: polar residues. Positions 796-810 (ADFKEPPSLPGKEKS) are enriched in basic and acidic residues. Residue Ser-810 is modified to Phosphoserine. A Phosphothreonine modification is found at Thr-822. 2 positions are modified to phosphoserine: Ser-826 and Ser-840. At Thr-842 the chain carries Phosphothreonine. Ser-892 bears the Phosphoserine mark.

In terms of assembly, interacts with SRF, forming the SRF-MRTFA nuclear complex which binds the 5'-CArG-3' consensus motif (CArG box) on DNA via SRF. Interacts (via RPEL repeats) with globular actin (G-actin), thereby regulating its subcellular location and activity of the complex formed with SRF. Either forms a trivalent (by binding three G-actin monomers) or pentavalent (by binding five G-actin monomers) complex with G-actin. Forms a nuclear ternary complex with SCAI and SRF, leading to suppress MRTFA-induced SRF transcriptional activity. Interacts with beta-actin (ACTB); interaction with ACTB prevents interaction with SCAI. Interacts with MRTFB. Post-translationally, phosphorylation at Ser-41 by Erk inhibits binding of globular actin (G-actin), unmasking the nuclear localization signal (NLS) and promoting nuclear import. As to expression, expressed in heart, brain, spleen, lung, liver, muscle, kidney and testis.

It is found in the cytoplasm. The protein localises to the nucleus. Its function is as follows. Transcription coactivator that associates with the serum response factor (SRF) transcription factor to control expression of genes regulating the cytoskeleton during development, morphogenesis and cell migration. The SRF-MRTFA complex activity responds to Rho GTPase-induced changes in cellular globular actin (G-actin) concentration, thereby coupling cytoskeletal gene expression to cytoskeletal dynamics. MRTFA binds G-actin via its RPEL repeats, regulating activity of the MRTFA-SRF complex. Activity is also regulated by filamentous actin (F-actin) in the nucleus. This chain is Myocardin-related transcription factor A (Mrtfa), found in Mus musculus (Mouse).